We begin with the raw amino-acid sequence, 154 residues long: Urease accessory protein UreE (154 aa).

Positions 135-154 (YGHGRTFGHDHGHAHDHHHA) are disordered.

It belongs to the UreE family.

It is found in the cytoplasm. In terms of biological role, involved in urease metallocenter assembly. Binds nickel. Probably functions as a nickel donor during metallocenter assembly. The protein is Urease accessory protein UreE of Paracoccus denitrificans (strain Pd 1222).